A 152-amino-acid chain; its full sequence is Large ribosomal subunit protein uL15 (152 aa).

Residues 1–66 (MLQLHTIKPN…PLHRRLPKKG (66 aa)) form a disordered region. Gly residues predominate over residues 24–36 (ESSGLGKTCGKGN).

Belongs to the universal ribosomal protein uL15 family. In terms of assembly, part of the 50S ribosomal subunit.

Binds to the 23S rRNA. The polypeptide is Large ribosomal subunit protein uL15 (Akkermansia muciniphila (strain ATCC BAA-835 / DSM 22959 / JCM 33894 / BCRC 81048 / CCUG 64013 / CIP 107961 / Muc)).